Here is a 110-residue protein sequence, read N- to C-terminus: UPF0060 membrane protein Psyr_3752 (110 aa).

A run of 4 helical transmembrane segments spans residues 5-25, 28-48, 59-79, and 84-104; these read LWFF…WLWL, GKSA…ALLL, AYAA…GLVE, and LGTD…ILLG.

Belongs to the UPF0060 family.

The protein localises to the cell inner membrane. The chain is UPF0060 membrane protein Psyr_3752 from Pseudomonas syringae pv. syringae (strain B728a).